A 603-amino-acid chain; its full sequence is MDTKIGLEVHFQLNTGKLFCRCPVEQSSGELMRFSRKLHISASELGNIDAAASYESMRSRSFQYVVTDNSCLVEMDEEPPKTPDERAIATAISVSKALNCDIVDHITYMRKIVIDGSNTTGFQRTAIVGINGHIETSKGPVRISTVCLEEDAARKIEEIGNTVVYSLDRLGIPLIEISTEPDIVDEDHAVEVARSIGYIVISTGNARHAVDAVRQDVNFSMGYGRVEIKGVSKLTQIRDVIRYEKERQENLRAAVDLIKSRGGLDRVSFNLKDVSDLFAGTKSKIIRSGIESGGVYAGILKNMAGTLKNGKLRMGKEIADLVRSYGIKGVMHSDELPGYGLTQDEVEALYRYLGKGDNDAVLLIAINQSRVKMIENSIFDRIQKIISMDLSETRGPAGEETVFLRPMPGKDRMYPETDIPVIKVDSKLMEMSSSIKPRTYAEVVQDLVDRYGISKQNAEYIASEMVVDAFRNIAEFVEAREAARILTQIVPDLERRTKKIIDHDRIIELCRRSKDLHFDRYQLEMALEILYERDDVASVLGDSRLKELSREEIKSIIREILSSGRNATQNSIIALIKEKTERVFDPRVAMECFNEVKNKNNVF.

This sequence belongs to the GatB/GatE family. GatE subfamily. In terms of assembly, heterodimer of GatD and GatE.

It catalyses the reaction L-glutamyl-tRNA(Gln) + L-glutamine + ATP + H2O = L-glutaminyl-tRNA(Gln) + L-glutamate + ADP + phosphate + H(+). Allows the formation of correctly charged Gln-tRNA(Gln) through the transamidation of misacylated Glu-tRNA(Gln) in organisms which lack glutaminyl-tRNA synthetase. The reaction takes place in the presence of glutamine and ATP through an activated gamma-phospho-Glu-tRNA(Gln). The GatDE system is specific for glutamate and does not act on aspartate. This Thermoplasma acidophilum (strain ATCC 25905 / DSM 1728 / JCM 9062 / NBRC 15155 / AMRC-C165) protein is Glutamyl-tRNA(Gln) amidotransferase subunit E.